The chain runs to 98 residues: MQRSRGFRSKSRRKMTKVVREGRSNPITNKLQKFEEGDLVHITINPSIQKGQPHPRFHGKTGKITDKKGKAYIVSLTDGNKAKELIIRPDHLKLQTSQ.

The span at Met-1–Lys-17 shows a compositional bias: basic residues. The segment at Met-1 to Thr-28 is disordered.

The protein belongs to the eukaryotic ribosomal protein eL21 family.

The sequence is that of Large ribosomal subunit protein eL21 from Methanobrevibacter smithii (strain ATCC 35061 / DSM 861 / OCM 144 / PS).